Consider the following 470-residue polypeptide: MPCQAPHSDSNVKNPSEATNQKDHSPRVGFVSLGCPKALVDSEQIITQLRAEGYAISGTYDGADLVVVNTCGFIDEAVQESLDAIGEALTENGKVIVTGCLGAKKDAAGHDIVSSVHPKVLAVTGPHALGEVMQAVHTHLPKPHDPFTDLVPAAGIKLTPKHYAYLKISEGCNHRCSFCIIPSMRGDLVSRPVAEVMLEAENLFKAGVKELLVISQDTSAYGVDVKYRTGFWNGRPLKTRMTELVAALGELAAQYGAWVRLHYVYPYPHVDEIIPLMNNGHVLPYLDVPLQHAHPDVLKRMKRPANAEKTMDRIRAWREICPELTIRSTFIAGFPGETEAEFQTLLDFIAEAELDRVGCFAYSPVEGATANDLPGALPDEVREERRARFMEVAEAVSARRLQRKVGQTLRVLVDEVNQDGGIGRSSADAPEIDGLVYIAPPQRTSQRYRAGEFVDVRITGADGHDLWGEV.

Residues 1–27 (MPCQAPHSDSNVKNPSEATNQKDHSPR) form a disordered region. The span at 7–19 (HSDSNVKNPSEAT) shows a compositional bias: polar residues. In terms of domain architecture, MTTase N-terminal spans 26–141 (PRVGFVSLGC…VMQAVHTHLP (116 aa)). Cys35, Cys71, Cys100, Cys172, Cys176, and Cys179 together coordinate [4Fe-4S] cluster. One can recognise a Radical SAM core domain in the interval 158–399 (LTPKHYAYLK…MEVAEAVSAR (242 aa)). One can recognise a TRAM domain in the interval 402-470 (QRKVGQTLRV…ADGHDLWGEV (69 aa)).

Belongs to the methylthiotransferase family. RimO subfamily. Requires [4Fe-4S] cluster as cofactor.

It localises to the cytoplasm. The enzyme catalyses L-aspartate(89)-[ribosomal protein uS12]-hydrogen + (sulfur carrier)-SH + AH2 + 2 S-adenosyl-L-methionine = 3-methylsulfanyl-L-aspartate(89)-[ribosomal protein uS12]-hydrogen + (sulfur carrier)-H + 5'-deoxyadenosine + L-methionine + A + S-adenosyl-L-homocysteine + 2 H(+). Functionally, catalyzes the methylthiolation of an aspartic acid residue of ribosomal protein uS12. The protein is Ribosomal protein uS12 methylthiotransferase RimO of Cupriavidus taiwanensis (strain DSM 17343 / BCRC 17206 / CCUG 44338 / CIP 107171 / LMG 19424 / R1) (Ralstonia taiwanensis (strain LMG 19424)).